Consider the following 146-residue polypeptide: UPF0260 protein SO_2573 (146 aa).

It belongs to the UPF0260 family.

This Shewanella oneidensis (strain ATCC 700550 / JCM 31522 / CIP 106686 / LMG 19005 / NCIMB 14063 / MR-1) protein is UPF0260 protein SO_2573.